We begin with the raw amino-acid sequence, 69 residues long: U-Asilidin(12)-Dg3b (69 aa).

The N-terminal stretch at 1-19 is a signal peptide; the sequence is MRFLNIFLFFAVMIAFVSA. Positions 20 to 33 are excised as a propeptide; the sequence is SPVLEEEEIDIEPR. Disulfide bonds link C36/C59, C45/C65, and C49/C67.

The protein belongs to the asilidin-12 family. In terms of tissue distribution, expressed by the venom gland.

It is found in the secreted. The recombinant peptide moderately increases Kv11.1/KCNH2/ERG1 currents and shifts the voltage-dependence of the channel activation to hyperpolarised potentials. In vivo, induces neurotoxic effects when injected into insects (tested on L.cuprina and A.domesticus). This is U-Asilidin(12)-Dg3b from Dolopus genitalis (Giant Australian assassin fly).